We begin with the raw amino-acid sequence, 157 residues long: Endoribonuclease YbeY (157 aa).

3 residues coordinate Zn(2+): histidine 121, histidine 125, and aspartate 131.

The protein belongs to the endoribonuclease YbeY family. Zn(2+) is required as a cofactor.

The protein localises to the cytoplasm. Functionally, single strand-specific metallo-endoribonuclease involved in late-stage 70S ribosome quality control and in maturation of the 3' terminus of the 16S rRNA. The sequence is that of Endoribonuclease YbeY from Salinibacter ruber (strain DSM 13855 / M31).